Here is a 64-residue protein sequence, read N- to C-terminus: Large ribosomal subunit protein bL35 (64 aa).

This sequence belongs to the bacterial ribosomal protein bL35 family.

This Vibrio campbellii (strain ATCC BAA-1116) protein is Large ribosomal subunit protein bL35.